The sequence spans 403 residues: Tyrosine--tRNA ligase (403 aa).

The 'HIGH' region signature appears at 42–51 (PTAPDLHLGH). Residues 226–230 (KMSKS) carry the 'KMSKS' region motif. Lys-229 is a binding site for ATP. The S4 RNA-binding domain maps to 336-396 (MPISAVLNKA…GKKAFGRITL (61 aa)).

It belongs to the class-I aminoacyl-tRNA synthetase family. TyrS type 2 subfamily. As to quaternary structure, homodimer.

Its subcellular location is the cytoplasm. The enzyme catalyses tRNA(Tyr) + L-tyrosine + ATP = L-tyrosyl-tRNA(Tyr) + AMP + diphosphate + H(+). Its function is as follows. Catalyzes the attachment of tyrosine to tRNA(Tyr) in a two-step reaction: tyrosine is first activated by ATP to form Tyr-AMP and then transferred to the acceptor end of tRNA(Tyr). The sequence is that of Tyrosine--tRNA ligase from Pseudomonas syringae pv. tomato (strain ATCC BAA-871 / DC3000).